We begin with the raw amino-acid sequence, 417 residues long: Serine hydroxymethyltransferase (417 aa).

Residues Leu-121 and 125-127 (GHL) each bind (6S)-5,6,7,8-tetrahydrofolate. N6-(pyridoxal phosphate)lysine is present on Lys-229. (6S)-5,6,7,8-tetrahydrofolate is bound at residue 355–357 (SPF).

This sequence belongs to the SHMT family. As to quaternary structure, homodimer. The cofactor is pyridoxal 5'-phosphate.

The protein localises to the cytoplasm. The enzyme catalyses (6R)-5,10-methylene-5,6,7,8-tetrahydrofolate + glycine + H2O = (6S)-5,6,7,8-tetrahydrofolate + L-serine. It functions in the pathway one-carbon metabolism; tetrahydrofolate interconversion. Its pathway is amino-acid biosynthesis; glycine biosynthesis; glycine from L-serine: step 1/1. Its function is as follows. Catalyzes the reversible interconversion of serine and glycine with tetrahydrofolate (THF) serving as the one-carbon carrier. This reaction serves as the major source of one-carbon groups required for the biosynthesis of purines, thymidylate, methionine, and other important biomolecules. Also exhibits THF-independent aldolase activity toward beta-hydroxyamino acids, producing glycine and aldehydes, via a retro-aldol mechanism. The sequence is that of Serine hydroxymethyltransferase from Xanthomonas euvesicatoria pv. vesicatoria (strain 85-10) (Xanthomonas campestris pv. vesicatoria).